Here is a 312-residue protein sequence, read N- to C-terminus: Putative S-adenosyl-L-methionine-dependent methyltransferase Mkms_0097 (312 aa).

Residues Asp-134 and 163–164 contribute to the S-adenosyl-L-methionine site; that span reads DL.

Belongs to the UPF0677 family.

Functionally, exhibits S-adenosyl-L-methionine-dependent methyltransferase activity. The polypeptide is Putative S-adenosyl-L-methionine-dependent methyltransferase Mkms_0097 (Mycobacterium sp. (strain KMS)).